We begin with the raw amino-acid sequence, 375 residues long: Queuine tRNA-ribosyltransferase (375 aa).

D89 acts as the Proton acceptor in catalysis. Substrate contacts are provided by residues 89-93 (DSGGF), D143, Q187, and G214. Residues 245 to 251 (GVGKPED) are RNA binding. The active-site Nucleophile is the D264. An RNA binding; important for wobble base 34 recognition region spans residues 269–273 (TRNAR). 4 residues coordinate Zn(2+): C302, C304, C307, and H333.

It belongs to the queuine tRNA-ribosyltransferase family. As to quaternary structure, homodimer. Within each dimer, one monomer is responsible for RNA recognition and catalysis, while the other monomer binds to the replacement base PreQ1. Zn(2+) is required as a cofactor.

It carries out the reaction 7-aminomethyl-7-carbaguanine + guanosine(34) in tRNA = 7-aminomethyl-7-carbaguanosine(34) in tRNA + guanine. The protein operates within tRNA modification; tRNA-queuosine biosynthesis. Its function is as follows. Catalyzes the base-exchange of a guanine (G) residue with the queuine precursor 7-aminomethyl-7-deazaguanine (PreQ1) at position 34 (anticodon wobble position) in tRNAs with GU(N) anticodons (tRNA-Asp, -Asn, -His and -Tyr). Catalysis occurs through a double-displacement mechanism. The nucleophile active site attacks the C1' of nucleotide 34 to detach the guanine base from the RNA, forming a covalent enzyme-RNA intermediate. The proton acceptor active site deprotonates the incoming PreQ1, allowing a nucleophilic attack on the C1' of the ribose to form the product. After dissociation, two additional enzymatic reactions on the tRNA convert PreQ1 to queuine (Q), resulting in the hypermodified nucleoside queuosine (7-(((4,5-cis-dihydroxy-2-cyclopenten-1-yl)amino)methyl)-7-deazaguanosine). This Salmonella arizonae (strain ATCC BAA-731 / CDC346-86 / RSK2980) protein is Queuine tRNA-ribosyltransferase.